Reading from the N-terminus, the 207-residue chain is 8-oxoguanine DNA glycosylase/AP lyase (207 aa).

Catalysis depends on residues Lys-129 and Asp-147.

This sequence belongs to the type-2 OGG1 family.

It catalyses the reaction 2'-deoxyribonucleotide-(2'-deoxyribose 5'-phosphate)-2'-deoxyribonucleotide-DNA = a 3'-end 2'-deoxyribonucleotide-(2,3-dehydro-2,3-deoxyribose 5'-phosphate)-DNA + a 5'-end 5'-phospho-2'-deoxyribonucleoside-DNA + H(+). Catalyzes the excision of an oxidatively damaged form of guanine (7,8-dihydro-8-oxoguanine = 8-oxoG) from DNA. Also cleaves the DNA backbone at apurinic/apyrimidinic sites (AP sites). This chain is 8-oxoguanine DNA glycosylase/AP lyase, found in Thermotoga sp. (strain RQ2).